A 420-amino-acid polypeptide reads, in one-letter code: UDP-N-acetylglucosamine 1-carboxyvinyltransferase (420 aa).

22 to 23 (KN) serves as a coordination point for phosphoenolpyruvate. Residue Arg93 participates in UDP-N-acetyl-alpha-D-glucosamine binding. Cys117 functions as the Proton donor in the catalytic mechanism. A 2-(S-cysteinyl)pyruvic acid O-phosphothioketal modification is found at Cys117. Positions 307 and 329 each coordinate UDP-N-acetyl-alpha-D-glucosamine.

Belongs to the EPSP synthase family. MurA subfamily.

It is found in the cytoplasm. It carries out the reaction phosphoenolpyruvate + UDP-N-acetyl-alpha-D-glucosamine = UDP-N-acetyl-3-O-(1-carboxyvinyl)-alpha-D-glucosamine + phosphate. It functions in the pathway cell wall biogenesis; peptidoglycan biosynthesis. In terms of biological role, cell wall formation. Adds enolpyruvyl to UDP-N-acetylglucosamine. The sequence is that of UDP-N-acetylglucosamine 1-carboxyvinyltransferase from Alcanivorax borkumensis (strain ATCC 700651 / DSM 11573 / NCIMB 13689 / SK2).